A 167-amino-acid polypeptide reads, in one-letter code: Ribosome maturation factor RimP (167 aa).

The protein belongs to the RimP family.

It localises to the cytoplasm. Required for maturation of 30S ribosomal subunits. The protein is Ribosome maturation factor RimP of Streptomyces griseus subsp. griseus (strain JCM 4626 / CBS 651.72 / NBRC 13350 / KCC S-0626 / ISP 5235).